Here is a 790-residue protein sequence, read N- to C-terminus: Eukaryotic translation initiation factor 3 subunit C (790 aa).

The tract at residues 1–62 (MSRFFVSGYN…DGRPSGPAYF (62 aa)) is disordered. Residues 14-53 (SSEEEDLLSSEEELLTSSGEENEDSDFFNDDDESSSDEED) are compositionally biased toward acidic residues. A PCI domain is found at 556–728 (FHQHINLELL…IVFTTDSQRS (173 aa)). Residues 748–790 (NEKTSSNGYAKKNQSQTQPQAQSKEVEENKFRYANVNTNTDEF) are disordered. Polar residues predominate over residues 751–770 (TSSNGYAKKNQSQTQPQAQS).

This sequence belongs to the eIF-3 subunit C family. In terms of assembly, component of the eukaryotic translation initiation factor 3 (eIF-3) complex.

The protein localises to the cytoplasm. Functionally, component of the eukaryotic translation initiation factor 3 (eIF-3) complex, which is involved in protein synthesis of a specialized repertoire of mRNAs and, together with other initiation factors, stimulates binding of mRNA and methionyl-tRNAi to the 40S ribosome. The eIF-3 complex specifically targets and initiates translation of a subset of mRNAs involved in cell proliferation. This is Eukaryotic translation initiation factor 3 subunit C from Lodderomyces elongisporus (strain ATCC 11503 / CBS 2605 / JCM 1781 / NBRC 1676 / NRRL YB-4239) (Yeast).